The sequence spans 84 residues: ATP synthase subunit c (84 aa).

The next 2 membrane-spanning stretches (helical) occupy residues 8-28 (VAGMCAIGAGLASIACIGGGI) and 56-76 (IIGSALSEATAIYGFLIAILL).

Belongs to the ATPase C chain family. As to quaternary structure, F-type ATPases have 2 components, F(1) - the catalytic core - and F(0) - the membrane proton channel. F(1) has five subunits: alpha(3), beta(3), gamma(1), delta(1), epsilon(1). F(0) has three main subunits: a(1), b(2) and c(10-14). The alpha and beta chains form an alternating ring which encloses part of the gamma chain. F(1) is attached to F(0) by a central stalk formed by the gamma and epsilon chains, while a peripheral stalk is formed by the delta and b chains.

The protein localises to the cell membrane. In terms of biological role, f(1)F(0) ATP synthase produces ATP from ADP in the presence of a proton or sodium gradient. F-type ATPases consist of two structural domains, F(1) containing the extramembraneous catalytic core and F(0) containing the membrane proton channel, linked together by a central stalk and a peripheral stalk. During catalysis, ATP synthesis in the catalytic domain of F(1) is coupled via a rotary mechanism of the central stalk subunits to proton translocation. Key component of the F(0) channel; it plays a direct role in translocation across the membrane. A homomeric c-ring of between 10-14 subunits forms the central stalk rotor element with the F(1) delta and epsilon subunits. This chain is ATP synthase subunit c, found in Clostridium novyi (strain NT).